The chain runs to 313 residues: Flagellin (313 aa).

Coiled coils occupy residues 5 to 33 and 97 to 117; these read INTN…ERLS and VQSE…KEVT. A run of 4 repeats spans residues 179-197, 199-217, 255-259, and 262-266. The interval 179 to 217 is 2 X 19 AA approximate tandem repeats; it reads KEAVAAKPAVPAQPAVPADPKNGVAAKPAVPAQPEVKAQ. Residues 190-199 show a composition bias toward low complexity; the sequence is AQPAVPADPK. Positions 190-211 are disordered; it reads AQPAVPADPKNGVAAKPAVPAQ. A coiled-coil region spans residues 252–298; that stretch reads ESTVNNLNNTVNNLSAARSRIEDADYAVEVSNMSRGQILQQAGTSVL. The 2 X 5 AA approximate repeats of V-N-N-L-N stretch occupies residues 255 to 266; sequence VNNLNNTVNNLS.

It belongs to the bacterial flagellin family.

The protein resides in the secreted. Its subcellular location is the bacterial flagellum. In terms of biological role, flagellin is the subunit protein which polymerizes to form the filaments of bacterial flagella. This Xenorhabdus nematophila (Achromobacter nematophilus) protein is Flagellin (fliC).